A 352-amino-acid chain; its full sequence is Putative conjugal transfer protein MT3759 (352 aa).

Residue 160-167 (GGTGAGKT) coordinates ATP.

Belongs to the GSP E family.

The protein localises to the cytoplasm. The protein is Putative conjugal transfer protein MT3759 of Mycobacterium tuberculosis (strain CDC 1551 / Oshkosh).